Consider the following 148-residue polypeptide: WAP four-disulfide core domain protein 12 (148 aa).

Residues 1 to 23 (MRSYSFWFLTAFLVFATLALGEA) form the signal peptide. Residues 27–74 (GKEKWGNCPAEKGSCIKSGPSQCHADNDCPGDKKCCFLSCSFKCVSPD) enclose the WAP domain. 4 cysteine pairs are disulfide-bonded: cysteine 34–cysteine 62, cysteine 41–cysteine 66, cysteine 49–cysteine 61, and cysteine 55–cysteine 70. The segment at 74 to 148 (DRIRKEGGNE…QEASPQKEWS (75 aa)) is disordered.

It is found in the secreted. Functionally, antibacterial protein. Putative acid-stable proteinase inhibitor. The chain is WAP four-disulfide core domain protein 12 (WFDC12) from Lemur catta (Ring-tailed lemur).